The sequence spans 173 residues: Crossover junction endodeoxyribonuclease RuvC (173 aa).

Catalysis depends on residues Asp-8, Glu-67, and Asp-139. The Mg(2+) site is built by Asp-8, Glu-67, and Asp-139.

Belongs to the RuvC family. As to quaternary structure, homodimer which binds Holliday junction (HJ) DNA. The HJ becomes 2-fold symmetrical on binding to RuvC with unstacked arms; it has a different conformation from HJ DNA in complex with RuvA. In the full resolvosome a probable DNA-RuvA(4)-RuvB(12)-RuvC(2) complex forms which resolves the HJ. Mg(2+) is required as a cofactor.

Its subcellular location is the cytoplasm. It carries out the reaction Endonucleolytic cleavage at a junction such as a reciprocal single-stranded crossover between two homologous DNA duplexes (Holliday junction).. In terms of biological role, the RuvA-RuvB-RuvC complex processes Holliday junction (HJ) DNA during genetic recombination and DNA repair. Endonuclease that resolves HJ intermediates. Cleaves cruciform DNA by making single-stranded nicks across the HJ at symmetrical positions within the homologous arms, yielding a 5'-phosphate and a 3'-hydroxyl group; requires a central core of homology in the junction. The consensus cleavage sequence is 5'-(A/T)TT(C/G)-3'. Cleavage occurs on the 3'-side of the TT dinucleotide at the point of strand exchange. HJ branch migration catalyzed by RuvA-RuvB allows RuvC to scan DNA until it finds its consensus sequence, where it cleaves and resolves the cruciform DNA. This chain is Crossover junction endodeoxyribonuclease RuvC, found in Sodalis glossinidius (strain morsitans).